Reading from the N-terminus, the 439-residue chain is Probable RNA-binding protein 23 (439 aa).

The interval 13–159 is disordered; sequence MLEAPYKKEE…PVREPVDNLS (147 aa). The span at 17–34 shows a compositional bias: basic and acidic residues; that stretch reads PYKKEEDEQQRKEVKKDY. Positions 36–57 are enriched in low complexity; sequence SNTTSSTSNSGNETSGSSTIGE. Positions 60–90 are enriched in basic residues; the sequence is KKKRSRSHNKSRDRKRSRSRDRDRYRRRNSR. Residues 103–125 show a composition bias toward basic and acidic residues; sequence RSWDRRHGSESRSRDHRREDRVH. Phosphoserine occurs at positions 128 and 149. Basic and acidic residues predominate over residues 144-159; the sequence is HFREKSPVREPVDNLS. 2 RRM domains span residues 166 to 243 and 263 to 341; these read RTVF…ASQA and MRLY…HVTE.

It belongs to the splicing factor SR family. Aryl sulfonamide anticancer drugs, such as indisulam (E7070) or E7820, promote ubiquitination and subsequent degradation by the DCX(DCAF15) complex. Aryl sulfonamide anticancer drugs change the substrate specificity of DCAF15 by acting as a molecular glue that promotes binding between DCAF15 and weak affinity interactor RBM23. Highly expressed in placenta, liver, skeletal muscle, heart and kidney. Expressed at lower levels in the colon, thymus, spleen, small intestine and lung.

It localises to the nucleus. In terms of biological role, RNA-binding protein that acts both as a transcription coactivator and pre-mRNA splicing factor. Regulates steroid hormone receptor-mediated transcription, independently of the pre-mRNA splicing factor activity. The polypeptide is Probable RNA-binding protein 23 (Homo sapiens (Human)).